A 1014-amino-acid polypeptide reads, in one-letter code: Klotho (1014 aa).

A signal peptide spans 1-35 (MPASAPPRRPRPPPPSLSLSLLLVLLGLAGRRLRA). Over 36 to 983 (EPGDGAQTWA…ECSFFHTRKP (948 aa)) the chain is Extracellular. 2 glycosyl hydrolase-1 regions span residues 59 to 508 (FQGT…KNGF) and 517 to 955 (LEGT…SNGF). N-linked (GlcNAc...) asparagine glycans are attached at residues Asn-161, Asn-285, Asn-346, Asn-609, Asn-614, and Asn-696. A helical membrane pass occupies residues 984–1004 (LVAFIAFLFFAFIVSLSLIFY). Residues 1005-1014 (YSKKGRRRYQ) lie on the Cytoplasmic side of the membrane.

Belongs to the glycosyl hydrolase 1 family. Klotho subfamily. As to quaternary structure, homodimer. Interacts with FGF23 and FGFR1.

The protein localises to the cell membrane. It localises to the apical cell membrane. Its subcellular location is the secreted. It catalyses the reaction a beta-D-glucuronoside + H2O = D-glucuronate + an alcohol. Its function is as follows. May have weak glycosidase activity towards glucuronylated steroids. However, it lacks essential active site Glu residues at positions 241 and 874, suggesting it may be inactive as a glycosidase in vivo. May be involved in the regulation of calcium and phosphorus homeostasis by inhibiting the synthesis of active vitamin D. Essential factor for the specific interaction between FGF23 and FGFR1. Functionally, the Klotho peptide generated by cleavage of the membrane-bound isoform may be an anti-aging circulating hormone which would extend life span by inhibiting insulin/IGF1 signaling. The chain is Klotho (KL) from Macaca fascicularis (Crab-eating macaque).